Consider the following 76-residue polypeptide: Paralithocin 3 (76 aa).

An N-terminal signal peptide occupies residues 1–23 (MGPMKVLLVMLVVMVAAPHIADA). Disulfide bonds link Cys31–Cys62, Cys40–Cys58, Cys44–Cys56, and Cys49–Cys59. Proline amide; partial is present on Pro74.

The protein belongs to the paralithocin family. The amidated form is probably the active form.

Has antibacterial activity, mainly against marine Gram-positive bacteria like C.maltaromaticum (MIC=25 uM), C.mobile (MIC=12.5 uM), C.divergens (MIC=25 uM) and C.funditum (MIC=12.5 uM) but also against C.glutamicum (MIC=12.5 uM). Has very little or no activity against Gram-negative bacteria. The chain is Paralithocin 3 from Paralithodes camtschaticus (Red king crab).